Consider the following 264-residue polypeptide: Alkaline ceramidase 1 (264 aa).

At Met-1 to Glu-27 the chain is on the lumenal side. Residues Asp-13, Trp-14, Glu-16, Asn-18, and Glu-27 each coordinate Ca(2+). The helical transmembrane segment at Phe-28–Met-48 threads the bilayer. Residues His-49–Arg-57 lie on the Cytoplasmic side of the membrane. The chain crosses the membrane as a helical span at residues Tyr-58–Met-78. His-77 contributes to the Zn(2+) binding site. At Thr-79 to Ser-81 the chain is on the lumenal side. Residues Phe-82–Ile-102 form a helical membrane-spanning segment. The Cytoplasmic portion of the chain corresponds to Trp-103–Gln-119. Residues Phe-120–Leu-137 traverse the membrane as a helical segment. Position 138 (Arg-138) is a topological domain, lumenal. A helical membrane pass occupies residues Pro-139 to Gln-159. Over Glu-160–Ser-176 the chain is Cytoplasmic. The helical transmembrane segment at Val-177–Trp-197 threads the bilayer. At Gln-198–His-206 the chain is on the lumenal side. Residues His-206 and His-210 each coordinate Zn(2+). A helical membrane pass occupies residues Ser-207 to Val-227. At Asp-228 to Cys-264 the chain is on the cytoplasmic side.

Belongs to the alkaline ceramidase family. Zn(2+) serves as cofactor. In terms of tissue distribution, mainly expressed in epidermis.

It localises to the endoplasmic reticulum membrane. It carries out the reaction an N-acylsphing-4-enine + H2O = sphing-4-enine + a fatty acid. The enzyme catalyses N-tetracosanoyl-sphing-4-enine + H2O = tetracosanoate + sphing-4-enine. The catalysed reaction is an N-acylsphinganine + H2O = sphinganine + a fatty acid. It catalyses the reaction N-(9Z-octadecenoyl)-sphing-4-enine + H2O = sphing-4-enine + (9Z)-octadecenoate. It carries out the reaction N-(15Z-tetracosenoyl)-sphing-4-enine + H2O = (15Z)-tetracosenoate + sphing-4-enine. The protein operates within lipid metabolism; sphingolipid metabolism. Its activity is regulated as follows. Inhibited by sphingosine. Activity is Ca(2+)-dependent. Endoplasmic reticulum ceramidase that catalyzes the hydrolysis of ceramides into sphingosine and free fatty acids at alkaline pH. Ceramides, sphingosine, and its phosphorylated form sphingosine-1-phosphate are bioactive lipids that mediate cellular signaling pathways regulating several biological processes including cell proliferation, apoptosis and differentiation. Exhibits a strong substrate specificity towards the natural stereoisomer of ceramides with D-erythro-sphingosine as a backbone and has a higher activity towards very long-chain unsaturated fatty acids like the C24:1-ceramide. May also hydrolyze dihydroceramides to produce dihydrosphingosine. ACER1 is a skin-specific ceramidase that regulates the levels of ceramides, sphingosine and sphingosine-1-phosphate in the epidermis, mediates the calcium-induced differentiation of epidermal keratinocytes and more generally plays an important role in skin homeostasis. The chain is Alkaline ceramidase 1 from Homo sapiens (Human).